Reading from the N-terminus, the 326-residue chain is Siroheme decarboxylase NirDL subunit (326 aa).

This sequence belongs to the Ahb/Nir family. Forms a complex composed of NirDL, NirG and NirH. All proteins are required for the total conversion of siroheme to didecarboxysiroheme.

It carries out the reaction siroheme + 2 H(+) = 12,18-didecarboxysiroheme + 2 CO2. Its pathway is porphyrin-containing compound metabolism. Its function is as follows. Involved in heme d1 biosynthesis. Catalyzes the decarboxylation of siroheme into didecarboxysiroheme. Siroheme is probably decarboxylated to monodecarboxysiroheme, which is in turn decarboxylated to didecarboxysiroheme. In Paracoccus pantotrophus (Thiosphaera pantotropha), this protein is Siroheme decarboxylase NirDL subunit.